Here is a 218-residue protein sequence, read N- to C-terminus: Pyridoxine/pyridoxamine 5'-phosphate oxidase (218 aa).

Substrate-binding positions include 12–15 and Arg-70; that span reads RMSY. FMN contacts are provided by residues 65-70, 80-81, Lys-87, and Gln-109; these read RTVLLR and YT. Substrate is bound by residues Tyr-127, Arg-131, and Ser-135. Residues 145–146 and Trp-191 contribute to the FMN site; that span reads QS. 197-199 contacts substrate; the sequence is RLH. Arg-201 contacts FMN.

Belongs to the pyridoxamine 5'-phosphate oxidase family. Homodimer. The cofactor is FMN.

The catalysed reaction is pyridoxamine 5'-phosphate + O2 + H2O = pyridoxal 5'-phosphate + H2O2 + NH4(+). It catalyses the reaction pyridoxine 5'-phosphate + O2 = pyridoxal 5'-phosphate + H2O2. Its pathway is cofactor metabolism; pyridoxal 5'-phosphate salvage; pyridoxal 5'-phosphate from pyridoxamine 5'-phosphate: step 1/1. It functions in the pathway cofactor metabolism; pyridoxal 5'-phosphate salvage; pyridoxal 5'-phosphate from pyridoxine 5'-phosphate: step 1/1. Functionally, catalyzes the oxidation of either pyridoxine 5'-phosphate (PNP) or pyridoxamine 5'-phosphate (PMP) into pyridoxal 5'-phosphate (PLP). This chain is Pyridoxine/pyridoxamine 5'-phosphate oxidase, found in Acinetobacter baylyi (strain ATCC 33305 / BD413 / ADP1).